Consider the following 290-residue polypeptide: Elongation factor Ts (290 aa).

The segment at 79–82 is involved in Mg(2+) ion dislocation from EF-Tu; the sequence is TDFV.

The protein belongs to the EF-Ts family.

Its subcellular location is the cytoplasm. Functionally, associates with the EF-Tu.GDP complex and induces the exchange of GDP to GTP. It remains bound to the aminoacyl-tRNA.EF-Tu.GTP complex up to the GTP hydrolysis stage on the ribosome. The chain is Elongation factor Ts from Pseudoalteromonas atlantica (strain T6c / ATCC BAA-1087).